A 445-amino-acid chain; its full sequence is Phosphoglucosamine mutase 1 (445 aa).

Ser102 (phosphoserine intermediate) is an active-site residue. Mg(2+)-binding residues include Ser102, Asp241, Asp243, and Asp245. Ser102 carries the phosphoserine modification.

The protein belongs to the phosphohexose mutase family. It depends on Mg(2+) as a cofactor. Activated by phosphorylation.

It carries out the reaction alpha-D-glucosamine 1-phosphate = D-glucosamine 6-phosphate. Functionally, catalyzes the conversion of glucosamine-6-phosphate to glucosamine-1-phosphate. The protein is Phosphoglucosamine mutase 1 of Shewanella amazonensis (strain ATCC BAA-1098 / SB2B).